Here is a 435-residue protein sequence, read N- to C-terminus: ATP-dependent protease ATPase subunit HslU (435 aa).

Residues Ile18, 60-65 (GVGKTE), Asp248, Glu313, and Arg385 contribute to the ATP site.

It belongs to the ClpX chaperone family. HslU subfamily. In terms of assembly, a double ring-shaped homohexamer of HslV is capped on each side by a ring-shaped HslU homohexamer. The assembly of the HslU/HslV complex is dependent on binding of ATP.

It is found in the cytoplasm. ATPase subunit of a proteasome-like degradation complex; this subunit has chaperone activity. The binding of ATP and its subsequent hydrolysis by HslU are essential for unfolding of protein substrates subsequently hydrolyzed by HslV. HslU recognizes the N-terminal part of its protein substrates and unfolds these before they are guided to HslV for hydrolysis. The polypeptide is ATP-dependent protease ATPase subunit HslU (Agrobacterium fabrum (strain C58 / ATCC 33970) (Agrobacterium tumefaciens (strain C58))).